A 278-amino-acid chain; its full sequence is Potassium/proton antiporter CemA (278 aa).

The next 4 membrane-spanning stretches (helical) occupy residues 60 to 80 (YLLLLITVPLIVNQISKSFVF), 155 to 175 (AMKNLLADVLAFVTFVYLIVT), 201 to 221 (FLIILFTDIFVGFHSTHGWEV), and 239 to 259 (IFLFIATFPVVLDTVFKYWIF).

It belongs to the CemA family.

The protein resides in the plastid. Its subcellular location is the chloroplast inner membrane. The enzyme catalyses K(+)(in) + H(+)(out) = K(+)(out) + H(+)(in). In terms of biological role, contributes to K(+)/H(+) antiport activity by supporting proton efflux to control proton extrusion and homeostasis in chloroplasts in a light-dependent manner to modulate photosynthesis. Prevents excessive induction of non-photochemical quenching (NPQ) under continuous-light conditions. Indirectly promotes efficient inorganic carbon uptake into chloroplasts. This chain is Potassium/proton antiporter CemA, found in Rhodomonas salina (Cryptomonas salina).